The sequence spans 534 residues: BEN domain-containing protein 4 (534 aa).

Disordered stretches follow at residues 1-24, 48-128, and 287-322; these read MEEE…RSPY, ELPH…AASS, and VHTL…EEGY. Pro residues predominate over residues 53–63; it reads RAPPPPPPPFA. Residues 69 to 83 show a composition bias toward polar residues; the sequence is SISSSEPPPQQFQAQ. The segment covering 91 to 109 has biased composition (low complexity); the sequence is GRAAAAASSSSPSCTPATS. Residues 295 to 310 show a composition bias toward polar residues; it reads SPATSESHGHPSSSTL. The segment covering 311–321 has biased composition (acidic residues); that stretch reads PEEEEEEDEEG. Residues 324–351 are a coiled coil; it reads PRCQELEQEVISLQQENEELRRKLESIP. Residues 390 to 498 form the BEN domain; that stretch reads NYPVYITSKQ…DAVGHARQGR (109 aa).

This chain is BEN domain-containing protein 4 (BEND4), found in Homo sapiens (Human).